A 67-amino-acid polypeptide reads, in one-letter code: Kappa-conotoxin-like Em11.8 (67 aa).

Residues 1–26 (MMFRLTSVSCFLLVIACLNLFQVVLT) form the signal peptide. Cystine bridges form between cysteine 29-cysteine 43, cysteine 36-cysteine 48, cysteine 42-cysteine 51, and cysteine 47-cysteine 55. Phenylalanine 59 bears the Phenylalanine amide mark. A propeptide spanning residues 63–67 (ATFQE) is cleaved from the precursor.

It belongs to the conotoxin I2 superfamily. In terms of tissue distribution, expressed by the venom duct.

Its subcellular location is the secreted. Its function is as follows. Inhibits the vertebrate voltage-gated potassium channels Kv1.1/KCNA1 and Kv1.3/KCNA3. The sequence is that of Kappa-conotoxin-like Em11.8 from Conus emaciatus (False virgin cone).